Consider the following 564-residue polypeptide: Hexose transporter HXT17 (564 aa).

Basic and acidic residues predominate over residues 1–12 (MQSSTESDRDIQ). A disordered region spans residues 1-22 (MQSSTESDRDIQDGPDADIHVA). Residues 1–52 (MQSSTESDRDIQDGPDADIHVAPPVEKEWSDGFDDNEVINGDNVEPPKRGLI) are Cytoplasmic-facing. A helical transmembrane segment spans residues 53-73 (GYLVIYLLCYPISFGGFLPGW). At 74 to 109 (DSGITAGFINMDNFKMNFGSYKHSTGEYYLSNVRMG) the chain is on the extracellular side. A helical transmembrane segment spans residues 110–130 (LLVAMFSIGCAIGGLIFARLA). Topologically, residues 131–136 (DTLGRR) are cytoplasmic. The helical transmembrane segment at 137 to 157 (LAIVIVVLVYMVGAIIQISSN) threads the bilayer. Over 158 to 167 (HKWYQYFVGK) the chain is Extracellular. Residues 168 to 188 (IIYGLGAGGCSVLCPMLLSEI) traverse the membrane as a helical segment. At 189 to 194 (APTDLR) the chain is on the cytoplasmic side. The helical transmembrane segment at 195-215 (GGLVSLYQLNMTFGIFLGYCS) threads the bilayer. Over 216–229 (VYGTRKYDNTAQWR) the chain is Extracellular. A helical membrane pass occupies residues 230 to 250 (VPLGLCFLWTLIIIIGMLLVP). At 251 to 333 (ESPRYLIECE…VQTFLQLTGE (83 aa)) the chain is on the cytoplasmic side. The chain crosses the membrane as a helical span at residues 334-350 (NYFFFYGTTIFKSVGLT). Topologically, residues 351-356 (DGFETS) are extracellular. A helical transmembrane segment spans residues 357–374 (IVLGTVNFFSTIIAVMVV). The Cytoplasmic portion of the chain corresponds to 375-381 (DKIGRRK). The helical transmembrane segment at 382 to 402 (CLLFGAAGMMACMVIFASIGV) threads the bilayer. Topologically, residues 403–424 (KCLYPHGQDGPSSKGAGNAMIV) are extracellular. Residues 425 to 445 (FTCFYIFCFATTWAPVAYIVV) traverse the membrane as a helical segment. Over 446-462 (AESFPSKVKSRAMSIST) the chain is Cytoplasmic. Residues 463-483 (ACNWLWQFLIGFFTPFITGSI) traverse the membrane as a helical segment. A topological domain (extracellular) is located at residue His-484. Residues 485–505 (FYYGYVFVGCLVAMFLYVFFF) traverse the membrane as a helical segment. The Cytoplasmic portion of the chain corresponds to 506–564 (LPETIGLSLEEIQLLYEEGIKPWKSASWVPPSRRGIPSEESKTEKKDWKKFLKFSKGSD).

This sequence belongs to the major facilitator superfamily. Sugar transporter (TC 2.A.1.1) family.

Its subcellular location is the membrane. Its function is as follows. Probable glucose transporter. This chain is Hexose transporter HXT17 (HXT17), found in Saccharomyces cerevisiae (strain ATCC 204508 / S288c) (Baker's yeast).